Here is a 281-residue protein sequence, read N- to C-terminus: Nuclear transcription factor Y subunit nfya-2 (281 aa).

2 disordered regions span residues 1 to 27 and 163 to 261; these read MNPRGNPSKMPTQIVLNRRPAAPARPQ and REMR…VQEE. Positions 150 to 173 match the Subunit association domain (SAD) motif; that stretch reads MVNPRQYKRIIKRREMRQKMEDSG. Residues 166–188 show a composition bias toward basic and acidic residues; the sequence is RQKMEDSGRLPLERQKYMHESRR. The NFYA/HAP2-type DNA-binding region spans 180 to 204; that stretch reads QKYMHESRRQHALKRRRTGGRFDAN. Residues 189–198 are compositionally biased toward basic residues; it reads QHALKRRRTG. A compositionally biased stretch (low complexity) spans 204-220; that stretch reads NAEAAAASSEPSISSAA.

The protein belongs to the NFYA/HAP2 subunit family. As to quaternary structure, forms a heterotrimeric transcription factor complex (nfya-2-NF-Y complex) composed of nfya-2, nfyb-1 and nfyc-1. Interacts with the nfyb-1 and nfyc-1 dimer; the interaction is required for subsequent binding to the 5'-CCAAT-3' box motif in DNA. Does not interact with either nfyb-1 or nfyc-1 in their monomeric form. In terms of tissue distribution, highly expressed in certain parts of the gonads. Expressed in the spermatheca, intestine and in some neurons in the head. Not expressed in the intestine, the hypodermis, body wall muscle surrounding the pseudocoelomic space, secretory cells in the pharyngeal terminal bulb wall, in the small ganglia surrounding the pharynx and in the neurons running anteriorly to the sensory organs in the head.

It is found in the nucleus. Its function is as follows. Component of the sequence-specific heterotrimeric transcription factor (nfya-2-NF-Y) which specifically recognizes a 5'-CCAAT-3' box motif found in the promoters of its target genes to regulate their expression and control cellular identity in particular tissue types. In association with the components in the nfya-2-NF-Y complex, may repress the expression of the T-box transcription factor tbx-2 throughout larval development, which most likely restricts its expression to certain tissues. The sequence is that of Nuclear transcription factor Y subunit nfya-2 from Caenorhabditis elegans.